A 131-amino-acid chain; its full sequence is Small ribosomal subunit protein bS6 (131 aa).

Residues isoleucine 96 to glutamate 131 form a disordered region. The span at lysine 104–aspartate 122 shows a compositional bias: basic and acidic residues.

This sequence belongs to the bacterial ribosomal protein bS6 family.

Functionally, binds together with bS18 to 16S ribosomal RNA. The sequence is that of Small ribosomal subunit protein bS6 from Shewanella oneidensis (strain ATCC 700550 / JCM 31522 / CIP 106686 / LMG 19005 / NCIMB 14063 / MR-1).